Here is a 119-residue protein sequence, read N- to C-terminus: Beta-2-microglobulin (119 aa).

The N-terminal stretch at 1 to 21 is a signal peptide; sequence MGKAAAVVLVTLVALLGLAQA. Positions 25 to 113 constitute an Ig-like C1-type domain; the sequence is PKVQVYSRFP…HETLKEPQVY (89 aa). A disulfide bridge connects residues C45 and C100.

The protein belongs to the beta-2-microglobulin family. As to quaternary structure, heterodimer of an alpha chain and a beta chain. Beta-2-microglobulin is the beta-chain of major histocompatibility complex class I molecules.

It localises to the secreted. Functionally, component of the class I major histocompatibility complex (MHC). Involved in the presentation of peptide antigens to the immune system. This is Beta-2-microglobulin (B2M) from Gallus gallus (Chicken).